We begin with the raw amino-acid sequence, 490 residues long: ATP synthase subunit beta, chloroplastic (490 aa).

170 to 177 (GGAGVGKT) contacts ATP.

The protein belongs to the ATPase alpha/beta chains family. As to quaternary structure, F-type ATPases have 2 components, CF(1) - the catalytic core - and CF(0) - the membrane proton channel. CF(1) has five subunits: alpha(3), beta(3), gamma(1), delta(1), epsilon(1). CF(0) has four main subunits: a(1), b(1), b'(1) and c(9-12).

The protein localises to the plastid. It localises to the chloroplast thylakoid membrane. The enzyme catalyses ATP + H2O + 4 H(+)(in) = ADP + phosphate + 5 H(+)(out). Functionally, produces ATP from ADP in the presence of a proton gradient across the membrane. The catalytic sites are hosted primarily by the beta subunits. This Ipomoea quamoclit (Cypress vine) protein is ATP synthase subunit beta, chloroplastic.